Reading from the N-terminus, the 487-residue chain is Probable Xaa-Pro aminopeptidase MGYG_06974 (487 aa).

Aspartate 255, aspartate 266, glutamate 414, and glutamate 458 together coordinate Mn(2+).

Belongs to the peptidase M24B family. The cofactor is Mn(2+).

The enzyme catalyses Release of any N-terminal amino acid, including proline, that is linked to proline, even from a dipeptide or tripeptide.. In terms of biological role, catalyzes the removal of a penultimate prolyl residue from the N-termini of peptides. This chain is Probable Xaa-Pro aminopeptidase MGYG_06974, found in Arthroderma gypseum (strain ATCC MYA-4604 / CBS 118893) (Microsporum gypseum).